Consider the following 426-residue polypeptide: Eukaryotic translation initiation factor 3 subunit M (426 aa).

The PCI domain occupies 179 to 350; it reads DDEDSYRYLI…KVFLVHRTTY (172 aa). Positions 385–401 are enriched in basic and acidic residues; sequence DVEGQREREQQELERKL. The segment at 385–426 is disordered; that stretch reads DVEGQREREQQELERKLAGAGMGGGPGGDRRRQQKPRTDEDD.

It belongs to the eIF-3 subunit M family. Component of the eukaryotic translation initiation factor 3 (eIF-3) complex.

Its subcellular location is the cytoplasm. In terms of biological role, component of the eukaryotic translation initiation factor 3 (eIF-3) complex, which is involved in protein synthesis of a specialized repertoire of mRNAs and, together with other initiation factors, stimulates binding of mRNA and methionyl-tRNAi to the 40S ribosome. The eIF-3 complex specifically targets and initiates translation of a subset of mRNAs involved in cell proliferation. This chain is Eukaryotic translation initiation factor 3 subunit M, found in Chaetomium globosum (strain ATCC 6205 / CBS 148.51 / DSM 1962 / NBRC 6347 / NRRL 1970) (Soil fungus).